The primary structure comprises 232 residues: Ion-translocating oxidoreductase complex subunit E (232 aa).

6 helical membrane passes run 18-38, 39-59, 69-89, 93-113, 127-147, and 182-202; these read GLVQLLGLCPLLAVTATITNA, LGLGVATMLVLIGSNILVSLV, IPVFVMIIAALVTTVQLLINA, GLYLSLGIFLPLIVTNCIIIG, AAFDGLMMGLGFTLVLAVLGA, and PFLLAMLPPGAFIVMGLLIAL.

It belongs to the NqrDE/RnfAE family. As to quaternary structure, the complex is composed of six subunits: RnfA, RnfB, RnfC, RnfD, RnfE and RnfG.

The protein localises to the cell inner membrane. In terms of biological role, part of a membrane-bound complex that couples electron transfer with translocation of ions across the membrane. In Shewanella sp. (strain W3-18-1), this protein is Ion-translocating oxidoreductase complex subunit E.